The chain runs to 177 residues: Alkyl hydroperoxide reductase AhpD (177 aa).

The Proton donor role is filled by Cys-130. A disulfide bridge connects residues Cys-130 and Cys-133. The active-site Cysteine sulfenic acid (-SOH) intermediate is Cys-133.

The protein belongs to the AhpD family. Homotrimer.

It catalyses the reaction N(6)-[(R)-dihydrolipoyl]-L-lysyl-[lipoyl-carrier protein] + a hydroperoxide = N(6)-[(R)-lipoyl]-L-lysyl-[lipoyl-carrier protein] + an alcohol + H2O. Functionally, antioxidant protein with alkyl hydroperoxidase activity. Required for the reduction of the AhpC active site cysteine residues and for the regeneration of the AhpC enzyme activity. The protein is Alkyl hydroperoxide reductase AhpD of Mycobacterium bovis (strain ATCC BAA-935 / AF2122/97).